A 122-amino-acid polypeptide reads, in one-letter code: Small ribosomal subunit protein uS13 (122 aa).

A disordered region spans residues 95–122 (GLPVRGQRTHTNARTRKGPAKSIAGKKK).

This sequence belongs to the universal ribosomal protein uS13 family. Part of the 30S ribosomal subunit. Forms a loose heterodimer with protein S19. Forms two bridges to the 50S subunit in the 70S ribosome.

Located at the top of the head of the 30S subunit, it contacts several helices of the 16S rRNA. In the 70S ribosome it contacts the 23S rRNA (bridge B1a) and protein L5 of the 50S subunit (bridge B1b), connecting the 2 subunits; these bridges are implicated in subunit movement. Contacts the tRNAs in the A and P-sites. The protein is Small ribosomal subunit protein uS13 of Nitrobacter hamburgensis (strain DSM 10229 / NCIMB 13809 / X14).